Here is a 919-residue protein sequence, read N- to C-terminus: WD repeat-containing protein 47 (919 aa).

Positions 10–42 constitute a LisH domain; sequence KEVEIIKLILDFLNSKKLHISMLALEKESGVIN. The CTLH domain occupies 45 to 102; sequence FSDDMLFLRQLILDGQWDEVLQFIQPLECMEKFDKKRFRYIILKQKFLEALCVNNAMS. Threonine 285 is modified (phosphothreonine). Serine 289, serine 292, serine 297, and serine 312 each carry phosphoserine. The segment at 393-421 is disordered; sequence GQSSVSEKEPANGAQNPGPAKQEKNELRD. Serine 422 is subject to Phosphoserine. The segment at 500–590 is disordered; it reads LNQQCNGSKG…SLSRSKGEED (91 aa). Residues 517–551 show a composition bias toward polar residues; it reads VTSFTTPPQDSSQRLTHDASNIHTSTPRNPGSTNH. At threonine 542 the chain carries Phosphothreonine. 7 WD repeats span residues 604–643, 659–698, 706–748, 753–791, 798–837, 840–879, and 886–918; these read EDTQAVRAVAFHPAGGLYAVGSNSKTLRVCAYPDVIDPSA, HHKGSIYCVAWSPCGQLLATGSNDKYVKVLPFNAETCNAT, MHDG…GQGL, GHTGHILALYTWSGWMIASGSQDKTVRFWDLRVPSCVRV, GTGSAVASVAVDPSGRLLATGQEDSSCMLYDIRGGRMVQS, PHSSDVRSVRFSPGAHYLLTGSYDMKIKVTDLQGDLTKQL, and EHKDKVIQCRWHTQDLSFLSSSADRTVTLWTYN.

Interacts with MAP1S (via WD repeats).

Its subcellular location is the cytoplasm. It localises to the cytoskeleton. The chain is WD repeat-containing protein 47 (WDR47) from Homo sapiens (Human).